A 285-amino-acid polypeptide reads, in one-letter code: HTH-type transcriptional regulator MurR (285 aa).

The region spanning 1–77 is the HTH rpiR-type domain; that stretch reads MLYLTKIRNA…MALIGEYSAS (77 aa). Residues 37 to 56 constitute a DNA-binding region (H-T-H motif); sequence SRQMAKQLGISQSSIVKFAQ. One can recognise an SIS domain in the interval 128 to 268; sequence IIEVISKAPF…FVGLVQLNDV (141 aa).

As to quaternary structure, homotetramer.

It participates in amino-sugar metabolism; N-acetylmuramate degradation [regulation]. Functionally, represses the expression of the murPQ operon involved in the uptake and degradation of N-acetylmuramic acid (MurNAc). Binds to two adjacent inverted repeats within the operator region. MurNAc 6-phosphate, the substrate of MurQ, is the specific inducer that weakens binding of MurR to the operator. The protein is HTH-type transcriptional regulator MurR of Escherichia coli (strain ATCC 8739 / DSM 1576 / NBRC 3972 / NCIMB 8545 / WDCM 00012 / Crooks).